The following is a 173-amino-acid chain: Propanediol dehydratase small subunit (173 aa).

The protein belongs to the diol/glycerol dehydratase small subunit family. In terms of assembly, the propanediol dehydratase enzyme is a heterotrimeric complex composed of a large (PduC), a medium (PduD) and a small (PduE) subunit. Adenosylcob(III)alamin serves as cofactor.

The protein resides in the bacterial microcompartment. It catalyses the reaction propane-1,2-diol = propanal + H2O. The protein operates within polyol metabolism; 1,2-propanediol degradation. With respect to regulation, inhibited by glycerol. Functionally, part of the PduCDE complex that catalyzes the dehydration of 1,2-propanediol (1,2-PD) to propionaldehyde. Required for S.typhimurium growth on 1,2-PD as the sole carbon and energy source. Localized in the bacterial microcompartment (BMC) dedicated to 1,2-PD degradation. The 1,2-PD-specific bacterial microcompartment (BMC) concentrates low levels of 1,2-PD catabolic enzymes, concentrates volatile reaction intermediates thus enhancing pathway flux and keeps the level of toxic, mutagenic propionaldehyde low. The chain is Propanediol dehydratase small subunit from Salmonella typhimurium (strain LT2 / SGSC1412 / ATCC 700720).